The sequence spans 597 residues: Elongation factor 4 (597 aa).

A tr-type G domain is found at 2 to 184 (KNIRNFSIIA…TMIAKIPPPV (183 aa)). Residues 14 to 19 (DHGKST) and 131 to 134 (NKID) contribute to the GTP site.

Belongs to the TRAFAC class translation factor GTPase superfamily. Classic translation factor GTPase family. LepA subfamily.

The protein resides in the cell inner membrane. It catalyses the reaction GTP + H2O = GDP + phosphate + H(+). Required for accurate and efficient protein synthesis under certain stress conditions. May act as a fidelity factor of the translation reaction, by catalyzing a one-codon backward translocation of tRNAs on improperly translocated ribosomes. Back-translocation proceeds from a post-translocation (POST) complex to a pre-translocation (PRE) complex, thus giving elongation factor G a second chance to translocate the tRNAs correctly. Binds to ribosomes in a GTP-dependent manner. This chain is Elongation factor 4, found in Methylobacillus flagellatus (strain ATCC 51484 / DSM 6875 / VKM B-1610 / KT).